The sequence spans 869 residues: Aconitate hydratase B (869 aa).

Substrate contacts are provided by residues Arg191, 244–246, 417–419, and Ser501; these read SSR and QDT. Residues Cys713, Cys772, and Cys775 each coordinate [4Fe-4S] cluster. 2 residues coordinate substrate: Arg794 and Arg799.

The protein belongs to the aconitase/IPM isomerase family. In terms of assembly, monomer. [4Fe-4S] cluster serves as cofactor.

The catalysed reaction is citrate = D-threo-isocitrate. It carries out the reaction (2S,3R)-3-hydroxybutane-1,2,3-tricarboxylate = 2-methyl-cis-aconitate + H2O. It functions in the pathway carbohydrate metabolism; tricarboxylic acid cycle; isocitrate from oxaloacetate: step 2/2. The protein operates within organic acid metabolism; propanoate degradation. Functionally, involved in the catabolism of short chain fatty acids (SCFA) via the tricarboxylic acid (TCA)(acetyl degradation route) and probably via the 2-methylcitrate cycle I (propionate degradation route). Catalyzes the reversible isomerization of citrate to isocitrate via cis-aconitate. Catalyzes the hydration of 2-methyl-cis-aconitate to yield (2R,3S)-2-methylisocitrate. The apo form of AcnB functions as a RNA-binding regulatory protein. This chain is Aconitate hydratase B (acnB), found in Pseudomonas aeruginosa (strain ATCC 15692 / DSM 22644 / CIP 104116 / JCM 14847 / LMG 12228 / 1C / PRS 101 / PAO1).